We begin with the raw amino-acid sequence, 104 residues long: Small ribosomal subunit protein bS6c (104 aa).

The protein belongs to the bacterial ribosomal protein bS6 family.

The protein localises to the plastid. Its subcellular location is the cyanelle. Functionally, binds together with bS18 to 16S ribosomal RNA. The chain is Small ribosomal subunit protein bS6c (rps6) from Cyanophora paradoxa.